Here is a 130-residue protein sequence, read N- to C-terminus: Glycine cleavage system H protein (130 aa).

In terms of domain architecture, Lipoyl-binding spans 22–103; it reads KAYIGISDCA…PYGSWIIAVE (82 aa). At Lys63 the chain carries N6-lipoyllysine.

This sequence belongs to the GcvH family. In terms of assembly, the glycine cleavage system is composed of four proteins: P, T, L and H. Requires (R)-lipoate as cofactor.

In terms of biological role, the glycine cleavage system catalyzes the degradation of glycine. The H protein shuttles the methylamine group of glycine from the P protein to the T protein. In Clostridium botulinum (strain Kyoto / Type A2), this protein is Glycine cleavage system H protein.